A 315-amino-acid polypeptide reads, in one-letter code: Voltage-dependent calcium channel gamma-3 subunit (315 aa).

4 consecutive transmembrane segments (helical) span residues 8-28, 104-124, 135-155, and 181-201; these read IQMLITTVGAFAAFSLMTIAV, SSVFPILSVTLLFFGGLCVAA, ILSAGIFFVSAGLSNIIGIIV, and FGAFSFIIAEIVGVVAVHIYI. Positions 232-253 are disordered; the sequence is RRRSSSRSTEPRSRDLSPISKG. Ser-248 carries the post-translational modification Phosphoserine.

Belongs to the PMP-22/EMP/MP20 family. CACNG subfamily. As to quaternary structure, the L-type calcium channel is composed of five subunits: alpha-1, alpha-2/delta, beta and gamma. Acts as an auxiliary subunit for AMPA-selective glutamate receptors (AMPARs). Found in a complex with GRIA1, GRIA2, GRIA3, GRIA4, CNIH2, CNIH3, CACNG2, CACNG4, CACNG5, CACNG7 and CACNG8. Interacts with AP4M1 and GRIA1; associates GRIA1 with the adaptor protein complex 4 (AP-4) to target GRIA1 to the somatodendritic compartment of neurons.

It is found in the membrane. In terms of biological role, regulates the trafficking to the somatodendritic compartment and gating properties of AMPA-selective glutamate receptors (AMPARs). Promotes their targeting to the cell membrane and synapses and modulates their gating properties by slowing their rates of activation, deactivation and desensitization. Does not show subunit-specific AMPA receptor regulation and regulates all AMPAR subunits. Thought to stabilize the calcium channel in an inactivated (closed) state. In Mus musculus (Mouse), this protein is Voltage-dependent calcium channel gamma-3 subunit (Cacng3).